Consider the following 917-residue polypeptide: Nitrate reductase [NADH] 1 (917 aa).

Residues Asp62 to Pro81 are disordered. Over residues Ser63–Glu74 the composition is skewed to acidic residues. Cys197 is a binding site for Mo-molybdopterin. Positions Ser545–Ile620 constitute a Cytochrome b5 heme-binding domain. His580 and His603 together coordinate heme. The 113-residue stretch at Arg660–Lys772 folds into the FAD-binding FR-type domain. FAD-binding positions include Arg712–Thr715, Val729–Tyr733, Phe734, Phe741, Leu746–Ser748, and Thr799.

This sequence belongs to the nitrate reductase family. As to quaternary structure, homodimer. The cofactor is FAD. Heme serves as cofactor. It depends on Mo-molybdopterin as a cofactor. As to expression, root, leaf, and shoot.

It carries out the reaction nitrite + NAD(+) + H2O = nitrate + NADH + H(+). Its function is as follows. Nitrate reductase is a key enzyme involved in the first step of nitrate assimilation in plants, fungi and bacteria. In Arabidopsis thaliana (Mouse-ear cress), this protein is Nitrate reductase [NADH] 1 (NIA1).